The sequence spans 137 residues: Probable 4-amino-4-deoxy-L-arabinose-phosphoundecaprenol flippase subunit ArnF (137 aa).

Residues 1 to 5 (MSRAR) lie on the Cytoplasmic side of the membrane. The chain crosses the membrane as a helical span at residues 6 to 26 (GFAFALGSVALVSGAQLGMRW). Over 27–49 (SMTRLPAPDQWLPALSAGSVDLA) the chain is Periplasmic. The chain crosses the membrane as a helical span at residues 50 to 70 (ALAVVAAAIAAYALSMLCWLL). Over 71–80 (ALRDLPLGRA) the chain is Cytoplasmic. The chain crosses the membrane as a helical span at residues 81–101 (YSLLSISYALVYLLAASLPLF). Residue N102 is a topological domain, periplasmic. The helical transmembrane segment at 103–123 (EPFTLSKTLGVALVILGVITI) threads the bilayer. Residues 124-137 (NSRSAPATSPRNTP) are Cytoplasmic-facing.

Belongs to the ArnF family. In terms of assembly, heterodimer of ArnE and ArnF.

It localises to the cell inner membrane. It participates in bacterial outer membrane biogenesis; lipopolysaccharide biosynthesis. Translocates 4-amino-4-deoxy-L-arabinose-phosphoundecaprenol (alpha-L-Ara4N-phosphoundecaprenol) from the cytoplasmic to the periplasmic side of the inner membrane. In Pseudomonas fluorescens (strain ATCC BAA-477 / NRRL B-23932 / Pf-5), this protein is Probable 4-amino-4-deoxy-L-arabinose-phosphoundecaprenol flippase subunit ArnF.